A 192-amino-acid chain; its full sequence is uncharacterized protein (192 aa).

The signal sequence occupies residues 1–17 (MFLHLILLAGLAPVVYL).

This is an uncharacterized protein from Caenorhabditis elegans.